The primary structure comprises 64 residues: Small ribosomal subunit protein bS21 (64 aa).

Belongs to the bacterial ribosomal protein bS21 family.

This chain is Small ribosomal subunit protein bS21, found in Pelagibacter ubique (strain HTCC1062).